We begin with the raw amino-acid sequence, 196 residues long: Probable phosphoheptose isomerase (196 aa).

The SIS domain maps to 43–196 (IVNVFNSGGK…MICSVIDSYY (154 aa)). 58-60 (NGG) provides a ligand contact to substrate. Zn(2+)-binding residues include His-67 and Glu-71. Substrate is bound by residues Glu-71, 100–101 (ND), 126–128 (STS), Ser-131, and Gln-178. Residues Gln-178 and His-186 each contribute to the Zn(2+) site.

Belongs to the SIS family. GmhA subfamily. Zn(2+) serves as cofactor.

The protein localises to the cytoplasm. The catalysed reaction is 2 D-sedoheptulose 7-phosphate = D-glycero-alpha-D-manno-heptose 7-phosphate + D-glycero-beta-D-manno-heptose 7-phosphate. It functions in the pathway carbohydrate biosynthesis; D-glycero-D-manno-heptose 7-phosphate biosynthesis; D-glycero-alpha-D-manno-heptose 7-phosphate and D-glycero-beta-D-manno-heptose 7-phosphate from sedoheptulose 7-phosphate: step 1/1. In terms of biological role, catalyzes the isomerization of sedoheptulose 7-phosphate in D-glycero-D-manno-heptose 7-phosphate. The protein is Probable phosphoheptose isomerase of Thermoplasma volcanium (strain ATCC 51530 / DSM 4299 / JCM 9571 / NBRC 15438 / GSS1).